Here is a 700-residue protein sequence, read N- to C-terminus: Transketolase (700 aa).

A substrate-binding site is contributed by His45. Thiamine diphosphate-binding positions include Thr48, His85, and 133–135 (GPL). Asp177 contacts Mg(2+). Thiamine diphosphate contacts are provided by Gly178 and Asn207. Residues Asn207 and Ile209 each contribute to the Mg(2+) site. 3 residues coordinate substrate: His283, Arg378, and Ser405. His283 serves as a coordination point for thiamine diphosphate. The Proton donor role is filled by Glu441. Thiamine diphosphate is bound at residue Phe467. 3 residues coordinate substrate: His491, Asp499, and Arg552.

It belongs to the transketolase family. Homodimer. The cofactor is Mg(2+). It depends on Ca(2+) as a cofactor. Mn(2+) is required as a cofactor. Requires Co(2+) as cofactor. Thiamine diphosphate serves as cofactor.

The catalysed reaction is D-sedoheptulose 7-phosphate + D-glyceraldehyde 3-phosphate = aldehydo-D-ribose 5-phosphate + D-xylulose 5-phosphate. Its function is as follows. Catalyzes the transfer of a two-carbon ketol group from a ketose donor to an aldose acceptor, via a covalent intermediate with the cofactor thiamine pyrophosphate. In Mycobacterium bovis (strain ATCC BAA-935 / AF2122/97), this protein is Transketolase (tkt).